We begin with the raw amino-acid sequence, 697 residues long: Transmembrane protein 168 (697 aa).

3 consecutive transmembrane segments (helical) span residues 36-56 (LGYL…YVRW), 63-83 (LILV…ILYY), and 89-109 (AASL…LCFL). N111 carries an N-linked (GlcNAc...) asparagine glycan. 7 helical membrane passes run 172–192 (MLVE…MLII), 199–219 (FLAI…SLET), 223–243 (PIAF…DIYF), 265–285 (LSVV…AFKL), 293–313 (FVIP…IIFL), 352–372 (FCLI…ILGA), and 380–400 (GIFL…HGLF). N-linked (GlcNAc...) asparagine glycans are attached at residues N533 and N598. A helical membrane pass occupies residues 646–666 (ITYPLVHLANWLCGLNLFWIC).

This sequence belongs to the TMEM168 family.

Its subcellular location is the nucleus membrane. In terms of biological role, plays a key role in maintaining the cardiac electrical stability by modulating cell surface expression of SCN5A. May play a role in the modulation of anxiety behavior by regulating GABAergic neuronal system in the nucleus accumbens. The protein is Transmembrane protein 168 of Homo sapiens (Human).